The sequence spans 538 residues: Putative cysteine ligase BshC (538 aa).

Residues 454–482 (LEKNAGFIQDQLQFLEKTVIRRIEEKENY) are a coiled coil.

This sequence belongs to the BshC family.

Involved in bacillithiol (BSH) biosynthesis. May catalyze the last step of the pathway, the addition of cysteine to glucosamine malate (GlcN-Mal) to generate BSH. This chain is Putative cysteine ligase BshC, found in Bacillus licheniformis (strain ATCC 14580 / DSM 13 / JCM 2505 / CCUG 7422 / NBRC 12200 / NCIMB 9375 / NCTC 10341 / NRRL NRS-1264 / Gibson 46).